The following is a 275-amino-acid chain: Glutamate racemase (275 aa).

Substrate is bound by residues 10–11 (DS) and 42–43 (YG). C74 acts as the Proton donor/acceptor in catalysis. 75 to 76 (NT) provides a ligand contact to substrate. Catalysis depends on C189, which acts as the Proton donor/acceptor. 190–191 (TH) is a binding site for substrate.

This sequence belongs to the aspartate/glutamate racemases family.

The enzyme catalyses L-glutamate = D-glutamate. Its pathway is cell wall biogenesis; peptidoglycan biosynthesis. In terms of biological role, provides the (R)-glutamate required for cell wall biosynthesis. The sequence is that of Glutamate racemase from Bartonella tribocorum (strain CIP 105476 / IBS 506).